Consider the following 357-residue polypeptide: UDP-N-acetylglucosamine--N-acetylmuramyl-(pentapeptide) pyrophosphoryl-undecaprenol N-acetylglucosamine transferase (357 aa).

UDP-N-acetyl-alpha-D-glucosamine-binding positions include 13 to 15 (TGG), Asn125, Arg161, Ser189, Ile243, and Gln288.

This sequence belongs to the glycosyltransferase 28 family. MurG subfamily.

It localises to the cell inner membrane. It catalyses the reaction di-trans,octa-cis-undecaprenyl diphospho-N-acetyl-alpha-D-muramoyl-L-alanyl-D-glutamyl-meso-2,6-diaminopimeloyl-D-alanyl-D-alanine + UDP-N-acetyl-alpha-D-glucosamine = di-trans,octa-cis-undecaprenyl diphospho-[N-acetyl-alpha-D-glucosaminyl-(1-&gt;4)]-N-acetyl-alpha-D-muramoyl-L-alanyl-D-glutamyl-meso-2,6-diaminopimeloyl-D-alanyl-D-alanine + UDP + H(+). It participates in cell wall biogenesis; peptidoglycan biosynthesis. Its function is as follows. Cell wall formation. Catalyzes the transfer of a GlcNAc subunit on undecaprenyl-pyrophosphoryl-MurNAc-pentapeptide (lipid intermediate I) to form undecaprenyl-pyrophosphoryl-MurNAc-(pentapeptide)GlcNAc (lipid intermediate II). The sequence is that of UDP-N-acetylglucosamine--N-acetylmuramyl-(pentapeptide) pyrophosphoryl-undecaprenol N-acetylglucosamine transferase from Bordetella pertussis (strain Tohama I / ATCC BAA-589 / NCTC 13251).